The chain runs to 467 residues: Light-independent protochlorophyllide reductase subunit N (467 aa).

[4Fe-4S] cluster is bound by residues Cys-23, Cys-48, and Cys-108.

It belongs to the BchN/ChlN family. As to quaternary structure, protochlorophyllide reductase is composed of three subunits; ChlL, ChlN and ChlB. Forms a heterotetramer of two ChlB and two ChlN subunits. [4Fe-4S] cluster serves as cofactor.

It carries out the reaction chlorophyllide a + oxidized 2[4Fe-4S]-[ferredoxin] + 2 ADP + 2 phosphate = protochlorophyllide a + reduced 2[4Fe-4S]-[ferredoxin] + 2 ATP + 2 H2O. It participates in porphyrin-containing compound metabolism; chlorophyll biosynthesis (light-independent). Component of the dark-operative protochlorophyllide reductase (DPOR) that uses Mg-ATP and reduced ferredoxin to reduce ring D of protochlorophyllide (Pchlide) to form chlorophyllide a (Chlide). This reaction is light-independent. The NB-protein (ChlN-ChlB) is the catalytic component of the complex. This is Light-independent protochlorophyllide reductase subunit N from Trichormus variabilis (strain ATCC 29413 / PCC 7937) (Anabaena variabilis).